The primary structure comprises 249 residues: Deoxyribose-phosphate aldolase (249 aa).

The active-site Proton donor/acceptor is the D94. K158 (schiff-base intermediate with acetaldehyde) is an active-site residue. The active-site Proton donor/acceptor is K200.

The protein belongs to the DeoC/FbaB aldolase family. DeoC type 1 subfamily.

It is found in the cytoplasm. It carries out the reaction 2-deoxy-D-ribose 5-phosphate = D-glyceraldehyde 3-phosphate + acetaldehyde. The protein operates within carbohydrate degradation; 2-deoxy-D-ribose 1-phosphate degradation; D-glyceraldehyde 3-phosphate and acetaldehyde from 2-deoxy-alpha-D-ribose 1-phosphate: step 2/2. Functionally, catalyzes a reversible aldol reaction between acetaldehyde and D-glyceraldehyde 3-phosphate to generate 2-deoxy-D-ribose 5-phosphate. The protein is Deoxyribose-phosphate aldolase of Thermoplasma volcanium (strain ATCC 51530 / DSM 4299 / JCM 9571 / NBRC 15438 / GSS1).